A 154-amino-acid chain; its full sequence is UPF0178 protein in pahZ1 5'region (154 aa).

Belongs to the UPF0178 family.

In Paucimonas lemoignei (Pseudomonas lemoignei), this protein is UPF0178 protein in pahZ1 5'region.